The chain runs to 231 residues: Sugar fermentation stimulation protein homolog (231 aa).

This sequence belongs to the SfsA family.

The sequence is that of Sugar fermentation stimulation protein homolog from Citrifermentans bemidjiense (strain ATCC BAA-1014 / DSM 16622 / JCM 12645 / Bem) (Geobacter bemidjiensis).